The primary structure comprises 365 residues: Phospho-N-acetylmuramoyl-pentapeptide-transferase (365 aa).

A run of 10 helical transmembrane segments spans residues 2–22 (ISLI…TPLL), 51–71 (TLGG…SALY), 80–100 (PSWS…LGFI), 118–138 (GKFI…LILP), 167–187 (VAIV…TNAI), 196–216 (LAAG…FWEF), 234–254 (PLDL…FLWY), 256–276 (SNPA…GLFA), 277–297 (AMSI…LFVI), and 340–360 (FWMI…GDWV).

This sequence belongs to the glycosyltransferase 4 family. MraY subfamily. Requires Mg(2+) as cofactor.

Its subcellular location is the cell membrane. The catalysed reaction is UDP-N-acetyl-alpha-D-muramoyl-L-alanyl-gamma-D-glutamyl-meso-2,6-diaminopimeloyl-D-alanyl-D-alanine + di-trans,octa-cis-undecaprenyl phosphate = di-trans,octa-cis-undecaprenyl diphospho-N-acetyl-alpha-D-muramoyl-L-alanyl-D-glutamyl-meso-2,6-diaminopimeloyl-D-alanyl-D-alanine + UMP. It participates in cell wall biogenesis; peptidoglycan biosynthesis. Functionally, catalyzes the initial step of the lipid cycle reactions in the biosynthesis of the cell wall peptidoglycan: transfers peptidoglycan precursor phospho-MurNAc-pentapeptide from UDP-MurNAc-pentapeptide onto the lipid carrier undecaprenyl phosphate, yielding undecaprenyl-pyrophosphoryl-MurNAc-pentapeptide, known as lipid I. This is Phospho-N-acetylmuramoyl-pentapeptide-transferase from Bifidobacterium adolescentis (strain ATCC 15703 / DSM 20083 / NCTC 11814 / E194a).